The primary structure comprises 519 residues: T-complex protein 1 subunit gamma (519 aa).

Belongs to the TCP-1 chaperonin family. In terms of assembly, component of the T-complex protein 1 (TCP1) complex.

It localises to the cytoplasm. Its function is as follows. Molecular chaperone; assists the folding of proteins upon ATP hydrolysis. The protein is T-complex protein 1 subunit gamma (CCT3) of Encephalitozoon cuniculi (strain GB-M1) (Microsporidian parasite).